The chain runs to 309 residues: Olfactory receptor 5H2 (309 aa).

The Extracellular portion of the chain corresponds to 1–28; sequence MEQDNTTLLTEFVLTGLTYQPEWKMPLF. Residue Asn-5 is glycosylated (N-linked (GlcNAc...) asparagine). The helical transmembrane segment at 29 to 49 threads the bilayer; it reads LVFLVIYLITIVWNLGLIALI. Residues 50-56 lie on the Cytoplasmic side of the membrane; sequence WNDPQLH. The helical transmembrane segment at 57 to 77 threads the bilayer; sequence IPMYFFLGSLAFVDAWISSTV. At 78–97 the chain is on the extracellular side; the sequence is TPKMLVNFLAKNRMISLSEC. Cys-97 and Cys-179 are joined by a disulfide. Residues 98-118 traverse the membrane as a helical segment; it reads MIQFFSFAFGGTTECFLLATM. The Cytoplasmic portion of the chain corresponds to 119–143; sequence AYDRYVAICKPLLYPVIMNNSLCIR. The chain crosses the membrane as a helical span at residues 144–164; sequence LLAFSFLGGFLHALIHEVLIF. Residues 165–193 are Extracellular-facing; sequence RLTFCNSNIIHHFYCDIIPLFMISCTDPS. Residues 194-214 form a helical membrane-spanning segment; that stretch reads INFLMVFILSGSIQVFTIVTV. The Cytoplasmic portion of the chain corresponds to 215–239; it reads LNSYTFALFTILKKKSVRGVRKAFS. A helical membrane pass occupies residues 240-260; that stretch reads TCGAHLLSVSLYYGPLIFMYL. At 261–271 the chain is on the extracellular side; sequence RPASPQADDQD. Residues 272-292 form a helical membrane-spanning segment; the sequence is MIDSVFYTIIIPLLNPIIYSL. Residues 293–309 are Cytoplasmic-facing; the sequence is RNKQVIDSFTKMVKRNV.

The protein belongs to the G-protein coupled receptor 1 family.

The protein localises to the cell membrane. In terms of biological role, odorant receptor. This is Olfactory receptor 5H2 (OR5H2) from Homo sapiens (Human).